We begin with the raw amino-acid sequence, 71 residues long: Large ribosomal subunit protein bL31 (71 aa).

Residues cysteine 16, cysteine 18, cysteine 37, and cysteine 40 each coordinate Zn(2+).

Belongs to the bacterial ribosomal protein bL31 family. Type A subfamily. Part of the 50S ribosomal subunit. Zn(2+) serves as cofactor.

Binds the 23S rRNA. This is Large ribosomal subunit protein bL31 from Yersinia pseudotuberculosis serotype O:1b (strain IP 31758).